Consider the following 150-residue polypeptide: UPF0208 membrane protein VS_0999 (150 aa).

2 consecutive transmembrane segments (helical) span residues 42–62 and 70–90; these read FGVK…MVFN and AVVM…WLGN.

It belongs to the UPF0208 family.

The protein localises to the cell inner membrane. The chain is UPF0208 membrane protein VS_0999 from Vibrio atlanticus (strain LGP32) (Vibrio splendidus (strain Mel32)).